The following is a 740-amino-acid chain: Catalase-peroxidase (740 aa).

The signal sequence occupies residues 1–27 (MFKSTLPIAAAISVALTSMVLPAKALA). Positions 106-228 (WHSAGVYRVH…LAAVEMGLIY (123 aa)) form a cross-link, tryptophyl-tyrosyl-methioninium (Trp-Tyr) (with M-254). Histidine 107 acts as the Proton acceptor in catalysis. Positions 228-254 (YVNPEGPHGKPDPLLAANDIRMSFGRM) form a cross-link, tryptophyl-tyrosyl-methioninium (Tyr-Met) (with W-106). Histidine 269 contributes to the heme b binding site.

It belongs to the peroxidase family. Peroxidase/catalase subfamily. As to quaternary structure, homodimer or homotetramer. Requires heme b as cofactor. Formation of the three residue Trp-Tyr-Met cross-link is important for the catalase, but not the peroxidase activity of the enzyme.

The catalysed reaction is H2O2 + AH2 = A + 2 H2O. The enzyme catalyses 2 H2O2 = O2 + 2 H2O. Bifunctional enzyme with both catalase and broad-spectrum peroxidase activity. This is Catalase-peroxidase from Colwellia psychrerythraea (strain 34H / ATCC BAA-681) (Vibrio psychroerythus).